A 1488-amino-acid chain; its full sequence is MMHQGQTMMYPSVAHPIPPQLGNVNLNMASQYPQQQQNKLVAPRKSSNIKITDPNTNKEVVLGRPSPNVAAQPQQVSGVATQPMVYYTNPQQTSYNQSGTYYSGTAGVVPTGSQGRFGYPATQAGQSIPFMNPSMSNTVPASHKDNIAGPAPSGQSQLIGKPQGGLHMEKPVPSVKISMPAGRSDASKFRVADHAVQHRQKDNEVISGAMVSNKPVSEKESKAPSIPEKHSKESKAPSAVEKHPTAVTQPLPIQAAKPETDAATANSPSFLTGADEKKESLPMTDSLKDNKKNATRNDTKNLPQQPQSASPAEELKGQTSVKLGDDVVGHMETKSFDSEKVDLTSKVSGLTSATSESSISPILGKSEADSTSVNAADVPAMVISSAKLSSASTGEPQAVESLGVAAVKSKEIEITHQISPESSDGKIMSDSTENESHDFTVDLAEQASLATSKPGNSDATSFVTDPQELPKECTTSVPEDHSLMNTSHNKDTQTLSASVDASDVSEVNSGTSSESTSQSTNDKDIRSSIQETGLAVSGITPGMLPVNHSVASEGQVKHADGAKDESSTEQSSAVPTGSVRPLSREKPTAELARTKSTAGRKKKRKEMLSKADAAGSSDLYNAYKGPQEQSESVATSDGADSSSTVDGTHVLPEESEREVMCEDDGKKKVEPDDWEDAADMSTPKLQSSDSGNQASAVQLPDSDMTEANGRKKYSRDFLLTFAHQYSSLPVGIRMDTVTSTLFKDLAGKSYVIDREPHPSSARGSDRPTSRGDRRGPAMDDDKWLKSGVPYSPNRDAHMDLTNGPAINYRGGPGGAHGVLRNPRGALLVGPQSNAPQVPRSGSDADRWQQKGLIPSPVTPMQVMHKAEKKYVVGKVSDEEQAKQRQLKAILNKLTPQNFDKLFEQVKEVNIDNVSTLTGVISQIFDKALMEPTFCEMYANFCSHLAGALPDFSEDNEKITFKRLLLNKCQEEFERGEREEAEADKTEEEGEIKQTKEEREEKRVKARRRMLGNIRLIGELYKKRMLTERIMHECIKKLLGNYQNPDEENIEALCKLMSTIGEMIDHPKAKEHMDAYFDRMRNLSTSQLISSRVRFLLRDSIDLRKNKWQQRRKVDGPKKIDEVHRDAAQERHAQSSRSRGPVVSSLPRRGAPSMDYGSRGSAAPLVSPGPQQRGRGFGNQDIRYEQERHQFDRTVPLPQRSVKDEAITLGPQGGLARGMSLRGQPPVSNSELPSVVDQRRILSGPNGYNSVPSTTREDTSSRIPDRFSGRIATAAQSASSSHRPASQEGRSGNKSYSEEELREKSIATIREYYSAKDEKEVALCIEELNAPSFYPSLVSLWVNDSFERKDMERELLAKLFVGLYNGGYNLLSKPQLIEGLSSVLASLEDALSDSPRAAEYLGRLLARFVVEKILVLQDVGKLIEEGGEEPGHLVQEGIAADVLGAVLEWIRTEKGDSFLKEAKTSSNLKLEDFRPQHLKRSKLDAFMLT.

Disordered regions lie at residues Val196 to Ser320, Asp337 to Glu367, and Thr415 to Ala707. 2 stretches are compositionally biased toward basic and acidic residues: residues Val216–Pro244 and Ala274–Thr299. 4 stretches are compositionally biased toward polar residues: residues Lys300–Ser310, Ser345–Ser360, Ser448–Thr464, and Cys473–Leu495. Over residues Ser496 to Thr520 the composition is skewed to low complexity. Residues Gln555 to Ser566 are compositionally biased toward basic and acidic residues. Positions Gln627–Asp646 are enriched in polar residues. The span at Leu651–Pro671 shows a compositional bias: basic and acidic residues. Residues Pro683–Ala696 are compositionally biased toward polar residues. The tract at residues Gly709–Phe721 is EIF4E-binding. Over residues Asp753 to Leu784 the composition is skewed to basic and acidic residues. Disordered stretches follow at residues Asp753 to Asp795, Arg974 to Glu1000, and Trp1107 to Glu1299. In terms of domain architecture, MIF4G spans Gln883 to Lys1106. Acidic residues predominate over residues Glu978 to Gly989. Basic and acidic residues-rich tracts occupy residues Glu990–Glu1000, Arg1111–Ala1132, Ile1181–Asp1191, and Thr1254–Ser1267. The span at Ala1273–Ser1294 shows a compositional bias: polar residues. One can recognise an MI domain in the interval Glu1299–Glu1423.

Belongs to the eukaryotic initiation factor 4G family. In terms of assembly, EIF4F is a multi-subunit complex, the composition of which varies with external and internal environmental conditions. It is composed of at least EIF4A, EIF4E and EIF4G. In higher plants two isoforms of EIF4F have been identified, named isoform EIF4F and isoform EIF(iso)4F. Isoform EIF4F has subunits p220 and p26, whereas isoform EIF(iso)4F has subunits p82 and p28.

Component of the protein complex eIF4F, which is involved in the recognition of the mRNA cap, ATP-dependent unwinding of 5'-terminal secondary structure and recruitment of mRNA to the ribosome. The protein is Eukaryotic translation initiation factor 4G of Triticum aestivum (Wheat).